Reading from the N-terminus, the 141-residue chain is Hemoglobin subunit alpha (141 aa).

One can recognise a Globin domain in the interval 1–141 (VLSPADKNNV…VSTVLTSKYR (141 aa)). Serine 3 is subject to Phosphoserine. 2 positions are modified to N6-succinyllysine: lysine 7 and lysine 11. Lysine 16 is modified (N6-acetyllysine; alternate). Lysine 16 carries the post-translational modification N6-succinyllysine; alternate. Tyrosine 24 carries the post-translational modification Phosphotyrosine. Serine 35 is modified (phosphoserine). Lysine 40 bears the N6-succinyllysine mark. A Phosphoserine modification is found at serine 49. Histidine 58 is a binding site for O2. Histidine 87 provides a ligand contact to heme b. Serine 102 is modified (phosphoserine). Phosphothreonine is present on threonine 108. A phosphoserine mark is found at serine 124 and serine 131. Threonine 134 and threonine 137 each carry phosphothreonine. Serine 138 bears the Phosphoserine mark.

This sequence belongs to the globin family. As to quaternary structure, heterotetramer of two alpha chains and two beta chains. As to expression, red blood cells.

In terms of biological role, involved in oxygen transport from the lung to the various peripheral tissues. Its function is as follows. Hemopressin acts as an antagonist peptide of the cannabinoid receptor CNR1. Hemopressin-binding efficiently blocks cannabinoid receptor CNR1 and subsequent signaling. The chain is Hemoglobin subunit alpha (HBA) from Urocitellus townsendii (Townsend's ground squirrel).